Reading from the N-terminus, the 92-residue chain is UPF0237 protein MA_3235 (92 aa).

Positions 7 to 81 constitute an ACT domain; the sequence is IITVIGSDRV…KSLGVEVKVQ (75 aa).

Belongs to the UPF0237 family.

This chain is UPF0237 protein MA_3235, found in Methanosarcina acetivorans (strain ATCC 35395 / DSM 2834 / JCM 12185 / C2A).